Reading from the N-terminus, the 360-residue chain is UDP-N-acetylglucosamine--N-acetylmuramyl-(pentapeptide) pyrophosphoryl-undecaprenol N-acetylglucosamine transferase (360 aa).

UDP-N-acetyl-alpha-D-glucosamine-binding positions include Thr15–Gly17, Asn124, Arg165, Ser191, and Gln285.

Belongs to the glycosyltransferase 28 family. MurG subfamily.

The protein localises to the cell inner membrane. It catalyses the reaction di-trans,octa-cis-undecaprenyl diphospho-N-acetyl-alpha-D-muramoyl-L-alanyl-D-glutamyl-meso-2,6-diaminopimeloyl-D-alanyl-D-alanine + UDP-N-acetyl-alpha-D-glucosamine = di-trans,octa-cis-undecaprenyl diphospho-[N-acetyl-alpha-D-glucosaminyl-(1-&gt;4)]-N-acetyl-alpha-D-muramoyl-L-alanyl-D-glutamyl-meso-2,6-diaminopimeloyl-D-alanyl-D-alanine + UDP + H(+). It participates in cell wall biogenesis; peptidoglycan biosynthesis. Functionally, cell wall formation. Catalyzes the transfer of a GlcNAc subunit on undecaprenyl-pyrophosphoryl-MurNAc-pentapeptide (lipid intermediate I) to form undecaprenyl-pyrophosphoryl-MurNAc-(pentapeptide)GlcNAc (lipid intermediate II). The polypeptide is UDP-N-acetylglucosamine--N-acetylmuramyl-(pentapeptide) pyrophosphoryl-undecaprenol N-acetylglucosamine transferase (Gloeothece citriformis (strain PCC 7424) (Cyanothece sp. (strain PCC 7424))).